Here is a 129-residue protein sequence, read N- to C-terminus: UPF0212 protein MA_1372 (129 aa).

This sequence belongs to the UPF0212 family.

The polypeptide is UPF0212 protein MA_1372 (Methanosarcina acetivorans (strain ATCC 35395 / DSM 2834 / JCM 12185 / C2A)).